The chain runs to 326 residues: Malate dehydrogenase (326 aa).

NAD(+) is bound at residue 12 to 18 (GAAGQIA). Residues R93 and R99 each contribute to the substrate site. Residues N106, Q113, and 130 to 132 (VGN) contribute to the NAD(+) site. Residues N132 and R163 each contribute to the substrate site. H188 acts as the Proton acceptor in catalysis.

It belongs to the LDH/MDH superfamily. MDH type 2 family.

The catalysed reaction is (S)-malate + NAD(+) = oxaloacetate + NADH + H(+). Catalyzes the reversible oxidation of malate to oxaloacetate. The protein is Malate dehydrogenase of Corynebacterium diphtheriae (strain ATCC 700971 / NCTC 13129 / Biotype gravis).